We begin with the raw amino-acid sequence, 502 residues long: Probable cytosol aminopeptidase (502 aa).

Residues Lys-269 and Asp-274 each contribute to the Mn(2+) site. Lys-281 is a catalytic residue. Positions 292, 351, and 353 each coordinate Mn(2+). Arg-355 is a catalytic residue.

It belongs to the peptidase M17 family. Requires Mn(2+) as cofactor.

The protein localises to the cytoplasm. The catalysed reaction is Release of an N-terminal amino acid, Xaa-|-Yaa-, in which Xaa is preferably Leu, but may be other amino acids including Pro although not Arg or Lys, and Yaa may be Pro. Amino acid amides and methyl esters are also readily hydrolyzed, but rates on arylamides are exceedingly low.. It carries out the reaction Release of an N-terminal amino acid, preferentially leucine, but not glutamic or aspartic acids.. Functionally, presumably involved in the processing and regular turnover of intracellular proteins. Catalyzes the removal of unsubstituted N-terminal amino acids from various peptides. This chain is Probable cytosol aminopeptidase, found in Vibrio vulnificus (strain CMCP6).